The following is a 114-amino-acid chain: As-peptide 126 (114 aa).

The signal sequence occupies residues 1-22 (MSRALICSLALLAMLVISGTYA). 9 consecutive repeat copies span residues 22-29 (ASPAANAE), 30-37 (ALAAANAE), 38-45 (ASAAANAE), 46-53 (PLAAANAE), 54-61 (PLAAANAE), 62-69 (PLAAANAD), 70-77 (PIAAANAE), 78-85 (PSAAANAE), and 86-93 (PLAAANAE). The interval 22–93 (ASPAANAEAL…AEPLAAANAE (72 aa)) is 9 X 8 AA approximate tandem repeats of [AP]-[ILS]-[AP]-A-A-N-A-[DE]. Residues 23-104 (SPAANAEALA…SAGPSPLAAA (82 aa)) constitute a propeptide that is removed on maturation. Residues 82-96 (ANAEPLAAANAEPSA) are compositionally biased toward low complexity. The segment at 82–114 (ANAEPLAAANAEPSAGPSPLAAAQDPPVVKMKG) is disordered. Residue Gln105 is modified to Pyrrolidone carboxylic acid. Lys113 carries the lysine amide modification.

Expressed by the venom gland.

It localises to the secreted. This chain is As-peptide 126, found in Anoplius samariensis (Solitary wasp).